The chain runs to 128 residues: MAWRVPGVRPASTFFPQVLRASSELPNRLPEGSTVGPKPDSSWEAGSQGNWGLTSSGAGQDSSAQKLGILSVQISLKIWTWEKPSGWGHLHAAVTGASCCSPLSQGGAICLVTAPQDKPDCSPCTSGH.

The interval 25 to 61 is disordered; it reads LPNRLPEGSTVGPKPDSSWEAGSQGNWGLTSSGAGQD. Residues 44-61 are compositionally biased toward polar residues; sequence EAGSQGNWGLTSSGAGQD.

This is an uncharacterized protein from Homo sapiens (Human).